A 189-amino-acid chain; its full sequence is Glycerol-3-phosphate acyltransferase (189 aa).

The next 5 membrane-spanning stretches (helical) occupy residues 1–21, 50–70, 77–97, 111–131, and 151–171; these read MFWL…AIVL, KLAI…VLLA, LHAQ…PLYF, MLMA…LLTF, and LLAW…VMIV.

Belongs to the PlsY family. In terms of assembly, probably interacts with PlsX.

The protein resides in the cell inner membrane. It catalyses the reaction an acyl phosphate + sn-glycerol 3-phosphate = a 1-acyl-sn-glycero-3-phosphate + phosphate. It functions in the pathway lipid metabolism; phospholipid metabolism. Functionally, catalyzes the transfer of an acyl group from acyl-phosphate (acyl-PO(4)) to glycerol-3-phosphate (G3P) to form lysophosphatidic acid (LPA). This enzyme utilizes acyl-phosphate as fatty acyl donor, but not acyl-CoA or acyl-ACP. In Pseudomonas putida (strain ATCC 47054 / DSM 6125 / CFBP 8728 / NCIMB 11950 / KT2440), this protein is Glycerol-3-phosphate acyltransferase.